An 88-amino-acid polypeptide reads, in one-letter code: Small ribosomal subunit protein bS20 (88 aa).

It belongs to the bacterial ribosomal protein bS20 family.

Its function is as follows. Binds directly to 16S ribosomal RNA. This is Small ribosomal subunit protein bS20 from Aromatoleum aromaticum (strain DSM 19018 / LMG 30748 / EbN1) (Azoarcus sp. (strain EbN1)).